We begin with the raw amino-acid sequence, 279 residues long: Putative methyltransferase Jann_4284 (279 aa).

This chain is Putative methyltransferase Jann_4284, found in Jannaschia sp. (strain CCS1).